Reading from the N-terminus, the 561-residue chain is MSEEDIRAARLEKVEQLKQLGTNPYAYRWESTHHAAQLQEKFADLTSGEEVDTEVAIAGRIMARRVFGKLAFFTLEDETGTIQLYLEKNRIQESMAETDADAFNHLKQLTDVGDILGAKGTIKRTEKGELSIYVKEYTILTKSLLPLPDKWHGLTDVAKRYRQRYVDLIVNPEVRQTFRRRAQITAGIRRYLEQRDFLEIETPVLQSETGGADARPFITYHNTLEMELYLRIATELHLKRLIVGGFEKVFELGRVFRNEGISTRHNPEFTSIEIYQAYADYNDMMALTEGIITTVAQDVLGTLQITYQGETVDLTPPWRRVTMHDLVKEYTGLDFHSFQTLEEAKSASKNAGIPGVDEAQTIGKILNLAFEEKVEANLIQPTFVIDYPVEISPLAKPHRSQPGLVERFELFIVGRETANSFSELTDPIDQRERLEAQAAKKAAGDLEAQGVDEDFLTALEYGMPPTGGLGIGIDRLVMLLTDSASIRDVIAFPLLKPEGSFIKEYRYESTTQTLTMEFDSGSVYEYFKVPLTVKEELDNAPSKGQYFHKFIKGKFKYEQLS.

Mg(2+) is bound by residues E409 and E416.

Belongs to the class-II aminoacyl-tRNA synthetase family. Homodimer. It depends on Mg(2+) as a cofactor.

The protein resides in the cytoplasm. The catalysed reaction is tRNA(Lys) + L-lysine + ATP = L-lysyl-tRNA(Lys) + AMP + diphosphate. This Trichormus variabilis (strain ATCC 29413 / PCC 7937) (Anabaena variabilis) protein is Lysine--tRNA ligase.